The primary structure comprises 418 residues: Glutamyl-tRNA reductase (418 aa).

Substrate-binding positions include 51–54 (TCNR), S107, 112–114 (EPQ), and Q118. C52 (nucleophile) is an active-site residue. 187-192 (GAGETA) provides a ligand contact to NADP(+).

It belongs to the glutamyl-tRNA reductase family. In terms of assembly, homodimer.

It catalyses the reaction (S)-4-amino-5-oxopentanoate + tRNA(Glu) + NADP(+) = L-glutamyl-tRNA(Glu) + NADPH + H(+). It functions in the pathway porphyrin-containing compound metabolism; protoporphyrin-IX biosynthesis; 5-aminolevulinate from L-glutamyl-tRNA(Glu): step 1/2. Its function is as follows. Catalyzes the NADPH-dependent reduction of glutamyl-tRNA(Glu) to glutamate 1-semialdehyde (GSA). This chain is Glutamyl-tRNA reductase, found in Dichelobacter nodosus (strain VCS1703A).